The sequence spans 201 residues: Cytochrome c oxidase assembly protein CtaG (201 aa).

Topologically, residues 1–12 (MTDQGENEKKQR) are cytoplasmic. The chain crosses the membrane as a helical; Signal-anchor for type II membrane protein span at residues 13-35 (RSNATIAVACLSFFVCMIGAAYA). At 36–201 (SVPLYRIFCQ…KAVGSTRNGG (166 aa)) the chain is on the periplasmic side.

Belongs to the COX11/CtaG family.

It is found in the cell inner membrane. Exerts its effect at some terminal stage of cytochrome c oxidase synthesis, probably by being involved in the insertion of the copper B into subunit I. The sequence is that of Cytochrome c oxidase assembly protein CtaG from Brucella suis biovar 1 (strain 1330).